Here is a 1095-residue protein sequence, read N- to C-terminus: Tyrosine-sulfated glycopeptide receptor 1 (1095 aa).

A helical membrane pass occupies residues 23 to 43; sequence PHMVLFVLLYVLSISVFFLTV. Residues Asn-62 and Asn-73 are each glycosylated (N-linked (GlcNAc...) asparagine). LRR repeat units follow at residues 91-115, 116-139, 141-165, 170-195, 197-221, 223-246, 247-270, 271-294, 295-318, 320-342, 344-366, 367-391, 393-415, 416-439, 441-466, 470-494, 495-517, 518-542, and 566-589; these read ENRV…VLDL, QRLS…FLSA, DQLL…SFGN, IFPI…VFLQ, AFNL…MCTA, PQLT…LSRC, SRLS…IYNL, PELE…ITRL, TKLT…IGKL, KLSS…LANC, KLVK…DFSR, FQSL…VYSC, MMTA…VLEL, ESLS…SILQ, CKKL…DFLR, FPSL…LIKL, QRVE…WLGT, LPDL…LFQL, and NPNN…IYIK. An N-linked (GlcNAc...) asparagine glycan is attached at Asn-165. 3 N-linked (GlcNAc...) asparagine glycosylation sites follow: Asn-199, Asn-204, and Asn-207. Residue Asn-258 is glycosylated (N-linked (GlcNAc...) asparagine). N-linked (GlcNAc...) asparagine glycosylation is present at Asn-341. An N-linked (GlcNAc...) asparagine glycan is attached at Asn-377. N-linked (GlcNAc...) asparagine glycosylation occurs at Asn-430. N-linked (GlcNAc...) asparagine glycans are attached at residues Asn-569, Asn-592, Asn-616, Asn-627, Asn-640, Asn-662, and Asn-714. LRR repeat units follow at residues 604–628, 629–652, and 654–677; these read LKVL…LSNL, TNLE…LTGL, and FLSY…QFDT. A helical transmembrane segment spans residues 721–741; sequence LVLGLFFGVSLILVLLALLVL. Residues Thr-792 and Thr-800 each carry the phosphothreonine modification. In terms of domain architecture, Protein kinase spans 803–1074; sequence FSQANIIGCG…PNIQQVVDWL (272 aa). ATP-binding positions include 809–817 and Lys-831; that span reads IGCGGFGLV. Tyr-876 and Tyr-916 each carry phosphotyrosine. Asp-929 serves as the catalytic Proton acceptor. Phosphotyrosine is present on Tyr-971.

It belongs to the protein kinase superfamily. Ser/Thr protein kinase family. Homo- and heterodimers with PSKR1. Interacts (via C-terminus) with AHA1 and AHA2 (via the R-domain). Autophosphorylated. Expressed ubiquitously, including in the shoot apical meristem and in the elongation zone of the root meristem.

It is found in the cell membrane. It catalyses the reaction L-seryl-[protein] + ATP = O-phospho-L-seryl-[protein] + ADP + H(+). The enzyme catalyses L-threonyl-[protein] + ATP = O-phospho-L-threonyl-[protein] + ADP + H(+). Tyrosine-sulfated glycopeptide receptor with a serine/threonine-protein kinase activity. Regulates, in response to tyrosine-sulfated glycopeptide binding, a signaling cascade involved in cellular proliferation and plant growth. Not involved in PSK perception. Involved in plant immunity, with antagonistic effects on bacterial and fungal resistances. Mediates activation of the plasma membrane H(+)-ATPase by PSY1. Phosphorylates AHA2 at Thr-881. In Arabidopsis thaliana (Mouse-ear cress), this protein is Tyrosine-sulfated glycopeptide receptor 1.